Here is a 283-residue protein sequence, read N- to C-terminus: MSRSPVIVRTLPALRRALDTLRARNASLALVPTMGALHDGHVSLVRLAKRRASKVAVSIFINPAQFAPNEDFAAYPRTWKADLARLTAEKVDLIWNPDAKTMYPAGFASKILTEGPALAGLEDRFRPQFFGGVTTVVGKLFAQVRPDLALFGEKDFQQLRVVARMARDLDLGVKVVGAQIVRERDGLAMSSRNRYLSPEHRESATALCRGLKEAAKRIRAGEAIEAALAGSAALITAAGFKIDYLEARHAETLAPVASRKDGPIRLLVAATIGTTRLIDNVAV.

Residue 34–41 participates in ATP binding; the sequence is MGALHDGH. His-41 serves as the catalytic Proton donor. A (R)-pantoate-binding site is contributed by Gln-65. Gln-65 is a beta-alanine binding site. Residue 152-155 coordinates ATP; the sequence is GEKD. Gln-158 is a binding site for (R)-pantoate. ATP contacts are provided by residues Val-181 and 189 to 192; that span reads MSSR.

This sequence belongs to the pantothenate synthetase family. Homodimer.

It localises to the cytoplasm. It catalyses the reaction (R)-pantoate + beta-alanine + ATP = (R)-pantothenate + AMP + diphosphate + H(+). Its pathway is cofactor biosynthesis; (R)-pantothenate biosynthesis; (R)-pantothenate from (R)-pantoate and beta-alanine: step 1/1. Catalyzes the condensation of pantoate with beta-alanine in an ATP-dependent reaction via a pantoyl-adenylate intermediate. This chain is Pantothenate synthetase, found in Rhodopseudomonas palustris (strain BisB18).